The following is a 157-amino-acid chain: Ribonuclease H (157 aa).

Residues 5-146 (IMKQVEIFTD…CDDLARTAAE (142 aa)) enclose the RNase H type-1 domain. Residues aspartate 14, glutamate 52, aspartate 74, and aspartate 138 each coordinate Mg(2+).

The protein belongs to the RNase H family. Monomer. Mg(2+) is required as a cofactor.

The protein resides in the cytoplasm. It carries out the reaction Endonucleolytic cleavage to 5'-phosphomonoester.. Its function is as follows. Endonuclease that specifically degrades the RNA of RNA-DNA hybrids. The polypeptide is Ribonuclease H (Aliivibrio salmonicida (strain LFI1238) (Vibrio salmonicida (strain LFI1238))).